A 413-amino-acid polypeptide reads, in one-letter code: Probable short/branched chain specific acyl-CoA dehydrogenase (413 aa).

FAD contacts are provided by residues Phe-152–Ser-161 and Trp-186–Thr-188. Ser-161 provides a ligand contact to substrate. Substrate is bound by residues Tyr-208, Tyr-262, and Asn-270 to Arg-273. Residues Arg-298, Gln-309, and Ser-366–Gly-370 each bind FAD. The active-site Proton acceptor is the Glu-393. Thr-395–Asn-397 is an FAD binding site.

It belongs to the acyl-CoA dehydrogenase family. Homotetramer. It depends on FAD as a cofactor.

It carries out the reaction 2-methylbutanoyl-CoA + oxidized [electron-transfer flavoprotein] + H(+) = (2E)-2-methylbut-2-enoyl-CoA + reduced [electron-transfer flavoprotein]. It participates in lipid metabolism; mitochondrial fatty acid beta-oxidation. It functions in the pathway amino-acid degradation; L-isoleucine degradation. Functionally, probable short and branched chain specific acyl-CoA dehydrogenase that catalyzes the removal of one hydrogen from C-2 and C-3 of the fatty acyl-CoA thioester, resulting in the formation of trans-2-enoyl-CoA. This Dictyostelium discoideum (Social amoeba) protein is Probable short/branched chain specific acyl-CoA dehydrogenase (acadsb).